A 397-amino-acid chain; its full sequence is Aurora kinase A (397 aa).

Residues 1–118 (MDRCKENCVS…SIQKTEDSKK (118 aa)) form a disordered region. 2 stretches are compositionally biased toward polar residues: residues 29–55 (QIPS…SQRV) and 84–102 (RLSN…SGNN). Phosphoserine occurs at positions 40 and 50. A compositionally biased stretch (basic and acidic residues) spans 103–118 (SEKEQTSIQKTEDSKK). Residues 126–376 (FDIGRPLGKG…LAEVLEHPWI (251 aa)) enclose the Protein kinase domain. Residues K136, K155, and 203-206 (LEYA) each bind ATP. Residue D249 is the Proton acceptor of the active site. K251 participates in a covalent cross-link: Glycyl lysine isopeptide (Lys-Gly) (interchain with G-Cter in SUMO2). ATP-binding positions include 253-254 (EN) and D267. The interval 273–286 (HAPSSRRTTLCGTL) is activation segment. Phosphothreonine is present on residues T280 and T281. The residue at position 335 (S335) is a Phosphoserine; by PKA and PAK. The span at 378-387 (ANSSKPPTGH) shows a compositional bias: polar residues. A disordered region spans residues 378–397 (ANSSKPPTGHNSKEATSKSS). Residues 388–397 (NSKEATSKSS) are compositionally biased toward basic and acidic residues.

It belongs to the protein kinase superfamily. Ser/Thr protein kinase family. Aurora subfamily. Part of a complex composed of NEDD9, AURKA and CTTN; within the complex NEDD9 acts as a scaffold protein and is required for complex formation. Identified in a complex with AUNIP and NIN. Interacts with CPEB1, JTB, TACC1, TPX2, PPP2CA, as well as with the protein phosphatase type 1 (PP1) isoforms PPP1CA, PPP1CB and PPP1CC. Also interacts with its substrates ARHGEF2, BORA, KIF2A, PARD3, and p53/TP53. Interaction with BORA promotes phosphorylation of PLK1. Interacts with FBXL7 and CIMAP3. Interacts with GADD45A, competing with its oligomerization. Interacts (via C-terminus) with AUNIP (via C-terminus). Interacts with SIRT2. Interacts with FRY; this interaction facilitates AURKA-mediated PLK1 phosphorylation. Interacts with MYCN; interaction is phospho-independent and triggers AURKA activation; AURKA competes with FBXW7 for binding to unphosphorylated MYCN but not for binding to phosphorylated MYCN. Interacts with HNRNPU. Interacts with AAAS. Interacts with KLHL18 and CUL3. Interacts with FOXP1. Interacts with HDAC6; AURKA-mediated phosphorylation of HDAC6 promotes deacetylation of alpha-tubulin. Activated by phosphorylation at Thr-281; this brings about a change in the conformation of the activation segment. Phosphorylation at Thr-281 varies during the cell cycle and is highest during M phase. Autophosphorylated at Thr-281 upon TPX2 binding. Thr-281 can be phosphorylated by several kinases, including PAK and PKA. Protein phosphatase type 1 (PP1) binds AURKA and inhibits its activity by dephosphorylating Thr-281 during mitosis. Phosphorylation at Ser-335 decreases the kinase activity. PPP2CA controls degradation by dephosphorylating Ser-52 at the end of mitosis. Phosphorylated in embryonic brain neurons. Post-translationally, ubiquitinated by CHFR, leading to its degradation by the proteasome. Ubiquitinated by the anaphase-promoting complex (APC), leading to its degradation by the proteasome. Ubiquitinated by the E3 ubiquitin-protein ligase complex SCF(FBXL7) during mitosis, leading to its degradation by the proteasome. Ubiquitinated by the CUL3-KLHL18 ligase leading to its activation at the centrosome which is required for initiating mitotic entry. Ubiquitination mediated by CUL3-KLHL18 ligase does not lead to its degradation by the proteasome. In terms of tissue distribution, detected in neurons in brain cortex and hippocampus (at protein level). Expressed in mammary gland and tumor.

It is found in the cytoplasm. Its subcellular location is the cytoskeleton. It localises to the microtubule organizing center. The protein resides in the centrosome. The protein localises to the spindle pole. It is found in the centriole. Its subcellular location is the cell projection. It localises to the neuron projection. The protein resides in the cilium. The protein localises to the cilium basal body. It is found in the basolateral cell membrane. The catalysed reaction is L-seryl-[protein] + ATP = O-phospho-L-seryl-[protein] + ADP + H(+). The enzyme catalyses L-threonyl-[protein] + ATP = O-phospho-L-threonyl-[protein] + ADP + H(+). With respect to regulation, activation of CDK1, appears to be an upstream event of AURKA activation. Phosphatase inhibitor-2 (PPP1R2) and TPX2 act also as activators. Inactivated by the G2 checkpoint. Inhibited by GADD45A and p53/TP53, and through dephosphorylation by protein phosphatase type 1 (PP1). MLN8054 is also a potent and selective inhibitor. Activated during the early phase of cilia disassembly in the presence of FBXL7 and CIMAP3. Inhibited by the small molecule inhibitor VX-680. Functionally, mitotic serine/threonine kinase that contributes to the regulation of cell cycle progression. Associates with the centrosome and the spindle microtubules during mitosis and plays a critical role in various mitotic events including the establishment of mitotic spindle, centrosome duplication, centrosome separation as well as maturation, chromosomal alignment, spindle assembly checkpoint, and cytokinesis. Required for normal spindle positioning during mitosis and for the localization of NUMA1 and DCTN1 to the cell cortex during metaphase. Required for initial activation of CDK1 at centrosomes. Phosphorylates numerous target proteins, including ARHGEF2, BORA, BRCA1, CDC25B, DLGP5, HDAC6, KIF2A, LATS2, NDEL1, PARD3, PPP1R2, PLK1, RASSF1, TACC3, p53/TP53 and TPX2. Phosphorylates MCRS1 which is required for MCRS1-mediated kinetochore fiber assembly and mitotic progression. Regulates KIF2A tubulin depolymerase activity. Required for normal axon formation. Plays a role in microtubule remodeling during neurite extension. Important for microtubule formation and/or stabilization. Also acts as a key regulatory component of the p53/TP53 pathway, and particularly the checkpoint-response pathways critical for oncogenic transformation of cells, by phosphorylating and stabilizating p53/TP53. Phosphorylates its own inhibitors, the protein phosphatase type 1 (PP1) isoforms, to inhibit their activity. Inhibits cilia outgrowth. Required for cilia disassembly via phosphorylation of HDAC6 and subsequent deacetylation of alpha-tubulin. Regulates protein levels of the anti-apoptosis protein BIRC5 by suppressing the expression of the SCF(FBXL7) E3 ubiquitin-protein ligase substrate adapter FBXL7 through the phosphorylation of the transcription factor FOXP1. The polypeptide is Aurora kinase A (Rattus norvegicus (Rat)).